The sequence spans 277 residues: Probable diphthine methyl ester synthase (277 aa).

S-adenosyl-L-methionine-binding positions include L9, D89, G92, S117–V118, L168, L227, and H252.

The protein belongs to the diphthine synthase family.

The catalysed reaction is 2-[(3S)-amino-3-carboxypropyl]-L-histidyl-[translation elongation factor 2] + 4 S-adenosyl-L-methionine = diphthine methyl ester-[translation elongation factor 2] + 4 S-adenosyl-L-homocysteine + 3 H(+). It participates in protein modification; peptidyl-diphthamide biosynthesis. In terms of biological role, S-adenosyl-L-methionine-dependent methyltransferase that catalyzes four methylations of the modified target histidine residue in translation elongation factor 2 (EF-2), to form an intermediate called diphthine methyl ester. The four successive methylation reactions represent the second step of diphthamide biosynthesis. In Arabidopsis thaliana (Mouse-ear cress), this protein is Probable diphthine methyl ester synthase.